Here is a 463-residue protein sequence, read N- to C-terminus: Argininosuccinate lyase (463 aa).

This sequence belongs to the lyase 1 family. Argininosuccinate lyase subfamily.

Its subcellular location is the cytoplasm. The catalysed reaction is 2-(N(omega)-L-arginino)succinate = fumarate + L-arginine. It functions in the pathway amino-acid biosynthesis; L-arginine biosynthesis; L-arginine from L-ornithine and carbamoyl phosphate: step 3/3. This chain is Argininosuccinate lyase, found in Streptococcus pneumoniae (strain JJA).